The following is a 363-amino-acid chain: Ribosome-binding ATPase YchF (363 aa).

Residues 3–256 (FKCGIVGLPN…LDDEERDEFM (254 aa)) form the OBG-type G domain. Residue 12 to 17 (NVGKST) coordinates ATP. Residues Ser-16 and Thr-36 each coordinate Mg(2+). In terms of domain architecture, TGS spans 278–361 (NLQTYFTAGV…KDGDVMNFLF (84 aa)).

The protein belongs to the TRAFAC class OBG-HflX-like GTPase superfamily. OBG GTPase family. YchF/OLA1 subfamily. The cofactor is Mg(2+).

Functionally, ATPase that binds to both the 70S ribosome and the 50S ribosomal subunit in a nucleotide-independent manner. The protein is Ribosome-binding ATPase YchF of Escherichia coli O157:H7.